Here is a 468-residue protein sequence, read N- to C-terminus: Glutamate--tRNA ligase (468 aa).

Positions 9–19 (PSPTGYLHVGG) match the 'HIGH' region motif. Cys-98, Cys-100, Cys-125, and Asp-127 together coordinate Zn(2+). The short motif at 235 to 239 (KLSKR) is the 'KMSKS' region element. Residue Lys-238 participates in ATP binding.

This sequence belongs to the class-I aminoacyl-tRNA synthetase family. Glutamate--tRNA ligase type 1 subfamily. As to quaternary structure, monomer. Zn(2+) serves as cofactor.

Its subcellular location is the cytoplasm. The catalysed reaction is tRNA(Glu) + L-glutamate + ATP = L-glutamyl-tRNA(Glu) + AMP + diphosphate. In terms of biological role, catalyzes the attachment of glutamate to tRNA(Glu) in a two-step reaction: glutamate is first activated by ATP to form Glu-AMP and then transferred to the acceptor end of tRNA(Glu). This is Glutamate--tRNA ligase from Idiomarina loihiensis (strain ATCC BAA-735 / DSM 15497 / L2-TR).